A 383-amino-acid polypeptide reads, in one-letter code: Probable L-aspartate decarboxylase (383 aa).

N6-(pyridoxal phosphate)lysine is present on K231.

Belongs to the group II decarboxylase family. MfnA subfamily. Pyridoxal 5'-phosphate serves as cofactor.

The enzyme catalyses L-aspartate + H(+) = beta-alanine + CO2. It participates in cofactor biosynthesis; coenzyme A biosynthesis. Catalyzes the decarboxylation of L-aspartate to produce beta-alanine. The protein is Probable L-aspartate decarboxylase of Thermococcus gammatolerans (strain DSM 15229 / JCM 11827 / EJ3).